The chain runs to 442 residues: F-box/kelch-repeat protein OR23 (442 aa).

Residues 37–84 (TLIPGLSNDVGRLILSFVPYPHISRIKSTCKSWYAFLSSKTLISLRHS) form the F-box domain. 6 Kelch repeats span residues 93–139 (LSHL…NFVA), 145–200 (YVYV…AMPG), 204–257 (RIIV…LVEN), 269–328 (EFWV…KIVA), 330–377 (DCGK…ALNG), and 390–437 (LMDT…TTVM).

The chain is F-box/kelch-repeat protein OR23 (OR23) from Arabidopsis thaliana (Mouse-ear cress).